Here is a 113-residue protein sequence, read N- to C-terminus: Large ribosomal subunit protein bL19 (113 aa).

This sequence belongs to the bacterial ribosomal protein bL19 family.

Its function is as follows. This protein is located at the 30S-50S ribosomal subunit interface and may play a role in the structure and function of the aminoacyl-tRNA binding site. The protein is Large ribosomal subunit protein bL19 of Corynebacterium diphtheriae (strain ATCC 700971 / NCTC 13129 / Biotype gravis).